The following is a 228-amino-acid chain: Small ribosomal subunit protein uS3 (228 aa).

Residues Val-39–Arg-107 enclose the KH type-2 domain.

The protein belongs to the universal ribosomal protein uS3 family. As to quaternary structure, part of the 30S ribosomal subunit. Forms a tight complex with proteins S10 and S14.

Binds the lower part of the 30S subunit head. Binds mRNA in the 70S ribosome, positioning it for translation. This is Small ribosomal subunit protein uS3 from Ectopseudomonas mendocina (strain ymp) (Pseudomonas mendocina).